Consider the following 104-residue polypeptide: Complex III assembly factor LYRM7 (104 aa).

Belongs to the complex I LYR family. Interacts with UQCRFS1.

The protein localises to the mitochondrion matrix. Functionally, assembly factor required for Rieske Fe-S protein UQCRFS1 incorporation into the cytochrome b-c1 (CIII) complex. Functions as a chaperone, binding to this subunit within the mitochondrial matrix and stabilizing it prior to its translocation and insertion into the late CIII dimeric intermediate within the mitochondrial inner membrane. In Xenopus tropicalis (Western clawed frog), this protein is Complex III assembly factor LYRM7 (lyrm7).